Consider the following 396-residue polypeptide: S-adenosylmethionine synthase 1 (396 aa).

E12 contacts Mg(2+). Residue H18 participates in ATP binding. Residue E46 coordinates K(+). L-methionine contacts are provided by E59 and Q102. Residues D170 to K172, S238 to F241, D249, R255 to K256, A272, K276, and K280 each bind ATP. Residue D249 participates in L-methionine binding. K280 is an L-methionine binding site.

It belongs to the AdoMet synthase family. In terms of assembly, homotetramer. Mn(2+) is required as a cofactor. It depends on Mg(2+) as a cofactor. Co(2+) serves as cofactor. The cofactor is K(+).

The protein resides in the cytoplasm. The enzyme catalyses L-methionine + ATP + H2O = S-adenosyl-L-methionine + phosphate + diphosphate. The protein operates within amino-acid biosynthesis; S-adenosyl-L-methionine biosynthesis; S-adenosyl-L-methionine from L-methionine: step 1/1. Functionally, catalyzes the formation of S-adenosylmethionine from methionine and ATP. The reaction comprises two steps that are both catalyzed by the same enzyme: formation of S-adenosylmethionine (AdoMet) and triphosphate, and subsequent hydrolysis of the triphosphate. This is S-adenosylmethionine synthase 1 (SAM1) from Oryza sativa subsp. japonica (Rice).